Consider the following 41-residue polypeptide: Photosystem II reaction center protein L (41 aa).

The helical transmembrane segment at 20–40 (SLYLGLLLVFVVGILFSSYFF) threads the bilayer.

It belongs to the PsbL family. PSII is composed of 1 copy each of membrane proteins PsbA, PsbB, PsbC, PsbD, PsbE, PsbF, PsbH, PsbI, PsbJ, PsbK, PsbL, PsbM, PsbT, PsbX, PsbY, PsbZ, Psb30/Ycf12, peripheral proteins PsbO, CyanoQ (PsbQ), PsbU, PsbV and a large number of cofactors. It forms dimeric complexes.

The protein localises to the cellular thylakoid membrane. One of the components of the core complex of photosystem II (PSII). PSII is a light-driven water:plastoquinone oxidoreductase that uses light energy to abstract electrons from H(2)O, generating O(2) and a proton gradient subsequently used for ATP formation. It consists of a core antenna complex that captures photons, and an electron transfer chain that converts photonic excitation into a charge separation. This subunit is found at the monomer-monomer interface and is required for correct PSII assembly and/or dimerization. This chain is Photosystem II reaction center protein L, found in Trichodesmium erythraeum (strain IMS101).